Consider the following 94-residue polypeptide: MKFLLLVLAALGFLTQVIPASAGGSKCVSNTPAYCRTYCHWGETALFMFNASRKCCISYSFLPKPDLPQLIGNHWQSRRNTQRKDKKQQTTVTS.

Positions 1–22 are cleaved as a signal peptide; it reads MKFLLLVLAALGFLTQVIPASA. Intrachain disulfides connect cysteine 27–cysteine 55 and cysteine 39–cysteine 56. Positions 72 to 94 are disordered; sequence GNHWQSRRNTQRKDKKQQTTVTS. Positions 76–86 are enriched in basic residues; it reads QSRRNTQRKDK.

This sequence belongs to the beta-defensin family.

Its subcellular location is the secreted. Functionally, has antibacterial activity. The polypeptide is Beta-defensin 132 (DEFB132) (Gorilla gorilla gorilla (Western lowland gorilla)).